The chain runs to 455 residues: Peroxisomal membrane protein PEX3 (455 aa).

Positions 113 to 125 (TVLSDDFSTSQEG) are enriched in polar residues. The tract at residues 113-135 (TVLSDDFSTSQEGAISEDTNKPP) is disordered. Residues 155–171 (FLTLIYCESLLIVFLHL) form a helical membrane-spanning segment.

It belongs to the peroxin-3 family. As to quaternary structure, component of the peroxisomal docking complex, composed of at least PEX3, PEX13, PEX14 and PEX17. Component of the peroxisomal translocation complex, composed of at least PEX3, PEX2, PEX10 and PEX12. Interacts with PEX19. Interacts with the pexophagy receptor ATG30.

The protein resides in the peroxisome membrane. Peroxisomal membrane protein required for peroxisome biosynthesis. Shared component of both the peroxisomal docking complex and the peroxisomal translocation complex. The two types of peroxisomal matrix targeting signals, PTS1 and PTS2, are first recognized in the cytosol by their receptors PEX5 and PEX7, respectively, which then carry the cargo to the peroxisomal membrane. The peroxisomal targeting signal (PTS) receptor-cargo complexes interact with peroxisomal membrane protein (PMP) components of the docking complex. They have then additional downstream interactions with the translocation complex, leading to the transport of fully folded and oligomerized cargo into the peroxisome matrix. PEX3 acts as an anchoring site for PEX19 on the peroxisomal membrane and thus plays a crucial role in the assembly of the peroxisomal translocation complex. Is also essential for the interaction between the two complexes. Finally. PEX3 activates selective autophagy of peroxisomes (pexophagy) via interaction with the pexophagy receptor ATG30. The protein is Peroxisomal membrane protein PEX3 of Komagataella pastoris (Yeast).